The chain runs to 415 residues: L-cysteine:1D-myo-inositol 2-amino-2-deoxy-alpha-D-glucopyranoside ligase (415 aa).

The tract at residues 1-20 (MQSWSETAVPSVPGQGPPLR) is disordered. Position 43 (Cys-43) interacts with Zn(2+). Residues 43–46 (CGIT), Thr-58, and 81–83 (NVT) contribute to the L-cysteinyl-5'-AMP site. Residues 45–55 (ITPYDATHLGH) carry the 'HIGH' region motif. Positions 187–192 (ERGGDP) match the 'ERGGDP' region motif. Residue Trp-227 coordinates L-cysteinyl-5'-AMP. Cys-231 is a binding site for Zn(2+). 249–251 (GSD) provides a ligand contact to L-cysteinyl-5'-AMP. A Zn(2+)-binding site is contributed by His-256. Ile-283 is a binding site for L-cysteinyl-5'-AMP. Residues 289 to 293 (KMSKS) carry the 'KMSKS' region motif.

The protein belongs to the class-I aminoacyl-tRNA synthetase family. MshC subfamily. Monomer. The cofactor is Zn(2+).

The catalysed reaction is 1D-myo-inositol 2-amino-2-deoxy-alpha-D-glucopyranoside + L-cysteine + ATP = 1D-myo-inositol 2-(L-cysteinylamino)-2-deoxy-alpha-D-glucopyranoside + AMP + diphosphate + H(+). Its function is as follows. Catalyzes the ATP-dependent condensation of GlcN-Ins and L-cysteine to form L-Cys-GlcN-Ins. The protein is L-cysteine:1D-myo-inositol 2-amino-2-deoxy-alpha-D-glucopyranoside ligase of Rhodococcus jostii (strain RHA1).